Here is a 255-residue protein sequence, read N- to C-terminus: Pimeloyl-[acyl-carrier protein] methyl ester esterase (255 aa).

Residues Trp-18, 78 to 79 (SL), and 139 to 143 (FLALD) contribute to the substrate site. Ser-78 functions as the Nucleophile in the catalytic mechanism. Residues Asp-203 and His-233 contribute to the active site. His-233 provides a ligand contact to substrate.

The protein belongs to the AB hydrolase superfamily. Carboxylesterase BioH family. Monomer.

It is found in the cytoplasm. The enzyme catalyses 6-carboxyhexanoyl-[ACP] methyl ester + H2O = 6-carboxyhexanoyl-[ACP] + methanol + H(+). It functions in the pathway cofactor biosynthesis; biotin biosynthesis. Functionally, the physiological role of BioH is to remove the methyl group introduced by BioC when the pimeloyl moiety is complete. It allows to synthesize pimeloyl-ACP via the fatty acid synthetic pathway through the hydrolysis of the ester bonds of pimeloyl-ACP esters. This is Pimeloyl-[acyl-carrier protein] methyl ester esterase from Xylella fastidiosa (strain M23).